A 176-amino-acid chain; its full sequence is ATP-dependent protease subunit HslV (176 aa).

Residue threonine 5 is part of the active site. The Na(+) site is built by serine 161, cysteine 164, and threonine 167.

This sequence belongs to the peptidase T1B family. HslV subfamily. A double ring-shaped homohexamer of HslV is capped on each side by a ring-shaped HslU homohexamer. The assembly of the HslU/HslV complex is dependent on binding of ATP.

It localises to the cytoplasm. It catalyses the reaction ATP-dependent cleavage of peptide bonds with broad specificity.. Its activity is regulated as follows. Allosterically activated by HslU binding. Protease subunit of a proteasome-like degradation complex believed to be a general protein degrading machinery. The polypeptide is ATP-dependent protease subunit HslV (Thermoanaerobacter pseudethanolicus (strain ATCC 33223 / 39E) (Clostridium thermohydrosulfuricum)).